A 330-amino-acid polypeptide reads, in one-letter code: Aspartate--ammonia ligase (330 aa).

It belongs to the class-II aminoacyl-tRNA synthetase family. AsnA subfamily.

It localises to the cytoplasm. The enzyme catalyses L-aspartate + NH4(+) + ATP = L-asparagine + AMP + diphosphate + H(+). Its pathway is amino-acid biosynthesis; L-asparagine biosynthesis; L-asparagine from L-aspartate (ammonia route): step 1/1. This is Aspartate--ammonia ligase from Streptococcus thermophilus (strain CNRZ 1066).